A 134-amino-acid polypeptide reads, in one-letter code: Prolactin (134 aa).

A disulfide bridge connects residues Cys-126 and Cys-134.

It belongs to the somatotropin/prolactin family.

Its subcellular location is the secreted. This is Prolactin from Bufo japonicus (Japanese common toad).